Reading from the N-terminus, the 441-residue chain is Histidinol dehydrogenase (441 aa).

Positions 136, 197, and 220 each coordinate NAD(+). Positions 243, 265, and 268 each coordinate substrate. Zn(2+) is bound by residues glutamine 265 and histidine 268. Catalysis depends on proton acceptor residues glutamate 333 and histidine 334. The substrate site is built by histidine 334, aspartate 367, glutamate 421, and histidine 426. Aspartate 367 provides a ligand contact to Zn(2+). Histidine 426 is a Zn(2+) binding site.

This sequence belongs to the histidinol dehydrogenase family. Requires Zn(2+) as cofactor.

It carries out the reaction L-histidinol + 2 NAD(+) + H2O = L-histidine + 2 NADH + 3 H(+). It functions in the pathway amino-acid biosynthesis; L-histidine biosynthesis; L-histidine from 5-phospho-alpha-D-ribose 1-diphosphate: step 9/9. Functionally, catalyzes the sequential NAD-dependent oxidations of L-histidinol to L-histidinaldehyde and then to L-histidine. This chain is Histidinol dehydrogenase, found in Pseudomonas putida (strain ATCC 47054 / DSM 6125 / CFBP 8728 / NCIMB 11950 / KT2440).